The following is a 354-amino-acid chain: Type II restriction enzyme BanI (354 aa).

Homodimer.

It carries out the reaction Endonucleolytic cleavage of DNA to give specific double-stranded fragments with terminal 5'-phosphates.. A P subtype restriction enzyme that recognizes the double-stranded sequence 5'-GGYRCC-3' and cleaves after G-1. This chain is Type II restriction enzyme BanI (banIR), found in Aneurinibacillus aneurinilyticus (Bacillus aneurinolyticus).